A 268-amino-acid polypeptide reads, in one-letter code: 4-hydroxy-tetrahydrodipicolinate reductase (268 aa).

NAD(+) is bound by residues 8 to 13 (GAAGRM) and Glu34. Residue Arg35 coordinates NADP(+). Residues 96 to 98 (GST) and 120 to 123 (SPNM) each bind NAD(+). The active-site Proton donor/acceptor is His153. (S)-2,3,4,5-tetrahydrodipicolinate is bound at residue His154. The active-site Proton donor is Lys157. 163–164 (GT) is a binding site for (S)-2,3,4,5-tetrahydrodipicolinate.

Belongs to the DapB family.

The protein localises to the cytoplasm. It catalyses the reaction (S)-2,3,4,5-tetrahydrodipicolinate + NAD(+) + H2O = (2S,4S)-4-hydroxy-2,3,4,5-tetrahydrodipicolinate + NADH + H(+). The enzyme catalyses (S)-2,3,4,5-tetrahydrodipicolinate + NADP(+) + H2O = (2S,4S)-4-hydroxy-2,3,4,5-tetrahydrodipicolinate + NADPH + H(+). It functions in the pathway amino-acid biosynthesis; L-lysine biosynthesis via DAP pathway; (S)-tetrahydrodipicolinate from L-aspartate: step 4/4. Catalyzes the conversion of 4-hydroxy-tetrahydrodipicolinate (HTPA) to tetrahydrodipicolinate. The chain is 4-hydroxy-tetrahydrodipicolinate reductase from Anaeromyxobacter sp. (strain Fw109-5).